Here is a 404-residue protein sequence, read N- to C-terminus: Pyrophosphate--fructose 6-phosphate 1-phosphotransferase (404 aa).

Residue Gly-13 participates in diphosphate binding. Asn-108 contributes to the Mg(2+) binding site. Substrate is bound by residues 136 to 138 (TID), 180 to 182 (MGR), Glu-237, and 295 to 298 (YLQR). The Proton acceptor role is filled by Asp-138.

The protein belongs to the phosphofructokinase type A (PFKA) family. PPi-dependent PFK group II subfamily. Clade 'B2' sub-subfamily. In terms of assembly, homodimer. The cofactor is Mg(2+).

The protein resides in the cytoplasm. It carries out the reaction beta-D-fructose 6-phosphate + diphosphate = beta-D-fructose 1,6-bisphosphate + phosphate + H(+). It functions in the pathway carbohydrate degradation; glycolysis; D-glyceraldehyde 3-phosphate and glycerone phosphate from D-glucose: step 3/4. With respect to regulation, non-allosteric. In terms of biological role, catalyzes the phosphorylation of D-fructose 6-phosphate, the first committing step of glycolysis. Uses inorganic phosphate (PPi) as phosphoryl donor instead of ATP like common ATP-dependent phosphofructokinases (ATP-PFKs), which renders the reaction reversible, and can thus function both in glycolysis and gluconeogenesis. Consistently, PPi-PFK can replace the enzymes of both the forward (ATP-PFK) and reverse (fructose-bisphosphatase (FBPase)) reactions. In Rhodospirillum rubrum (strain ATCC 11170 / ATH 1.1.1 / DSM 467 / LMG 4362 / NCIMB 8255 / S1), this protein is Pyrophosphate--fructose 6-phosphate 1-phosphotransferase.